We begin with the raw amino-acid sequence, 87 residues long: Small ribosomal subunit protein bS20 (87 aa).

The segment at 1-21 (MANIKQQIKRNKTNEKRRLKN) is disordered. Residues 7-20 (QIKRNKTNEKRRLK) are compositionally biased toward basic residues.

The protein belongs to the bacterial ribosomal protein bS20 family.

Its function is as follows. Binds directly to 16S ribosomal RNA. The polypeptide is Small ribosomal subunit protein bS20 (Phytoplasma mali (strain AT)).